Consider the following 490-residue polypeptide: Aspartyl/glutamyl-tRNA(Asn/Gln) amidotransferase subunit B (490 aa).

It belongs to the GatB/GatE family. GatB subfamily. Heterotrimer of A, B and C subunits.

It carries out the reaction L-glutamyl-tRNA(Gln) + L-glutamine + ATP + H2O = L-glutaminyl-tRNA(Gln) + L-glutamate + ADP + phosphate + H(+). The enzyme catalyses L-aspartyl-tRNA(Asn) + L-glutamine + ATP + H2O = L-asparaginyl-tRNA(Asn) + L-glutamate + ADP + phosphate + 2 H(+). In terms of biological role, allows the formation of correctly charged Asn-tRNA(Asn) or Gln-tRNA(Gln) through the transamidation of misacylated Asp-tRNA(Asn) or Glu-tRNA(Gln) in organisms which lack either or both of asparaginyl-tRNA or glutaminyl-tRNA synthetases. The reaction takes place in the presence of glutamine and ATP through an activated phospho-Asp-tRNA(Asn) or phospho-Glu-tRNA(Gln). The protein is Aspartyl/glutamyl-tRNA(Asn/Gln) amidotransferase subunit B of Burkholderia ambifaria (strain MC40-6).